The chain runs to 230 residues: 5'-methylthioadenosine/S-adenosylhomocysteine nucleosidase (230 aa).

E12 functions as the Proton acceptor in the catalytic mechanism. Residues G78, I153, and 174-175 (ME) each bind substrate. Catalysis depends on D198, which acts as the Proton donor.

This sequence belongs to the PNP/UDP phosphorylase family. MtnN subfamily.

It carries out the reaction S-adenosyl-L-homocysteine + H2O = S-(5-deoxy-D-ribos-5-yl)-L-homocysteine + adenine. The enzyme catalyses S-methyl-5'-thioadenosine + H2O = 5-(methylsulfanyl)-D-ribose + adenine. The catalysed reaction is 5'-deoxyadenosine + H2O = 5-deoxy-D-ribose + adenine. It participates in amino-acid biosynthesis; L-methionine biosynthesis via salvage pathway; S-methyl-5-thio-alpha-D-ribose 1-phosphate from S-methyl-5'-thioadenosine (hydrolase route): step 1/2. Catalyzes the irreversible cleavage of the glycosidic bond in both 5'-methylthioadenosine (MTA) and S-adenosylhomocysteine (SAH/AdoHcy) to adenine and the corresponding thioribose, 5'-methylthioribose and S-ribosylhomocysteine, respectively. Also cleaves 5'-deoxyadenosine, a toxic by-product of radical S-adenosylmethionine (SAM) enzymes, into 5-deoxyribose and adenine. This is 5'-methylthioadenosine/S-adenosylhomocysteine nucleosidase from Shewanella frigidimarina (strain NCIMB 400).